The primary structure comprises 211 residues: PITH domain-containing protein GA19395 (211 aa).

The region spanning 20–192 (DHALEMGIEY…GVTICNYEAR (173 aa)) is the PITH domain.

It belongs to the PITHD1 family.

The protein is PITH domain-containing protein GA19395 of Drosophila pseudoobscura pseudoobscura (Fruit fly).